A 274-amino-acid chain; its full sequence is MAHYFVGDIQGCFEELQLLLNNVDFNPSKDQLWAVGDLVARGPGSLETLRYFRQLEGSGRVVLGNHDLHLLAVNAKIKRANPNDKLGPLLTAPDIGSLIDWLRMQPLYQELPEHNLVMTHAGVPPQWSLETLREEADHVAAALRSDDYLTSLICHMYTNGSNCWHDSMSELERKIYCINALTRMRFLHSDGRLDFDCKLPPSACEDPDLSPWFEHSGLLNSTHTLVFGHWAAVMGKVPSSTIHALDTGCCWGEHLTLWHLESNQKITQNKLKKS.

The protein belongs to the Ap4A hydrolase family.

It catalyses the reaction P(1),P(4)-bis(5'-adenosyl) tetraphosphate + H2O = 2 ADP + 2 H(+). In terms of biological role, hydrolyzes diadenosine 5',5'''-P1,P4-tetraphosphate to yield ADP. The protein is Bis(5'-nucleosyl)-tetraphosphatase, symmetrical of Shewanella sediminis (strain HAW-EB3).